Here is a 118-residue protein sequence, read N- to C-terminus: Large ribosomal subunit protein bL19 (118 aa).

This sequence belongs to the bacterial ribosomal protein bL19 family.

In terms of biological role, this protein is located at the 30S-50S ribosomal subunit interface and may play a role in the structure and function of the aminoacyl-tRNA binding site. The chain is Large ribosomal subunit protein bL19 from Helicobacter pylori (strain G27).